A 431-amino-acid chain; its full sequence is Polyprenol-phosphate-mannose-dependent alpha-(1-2)-phosphatidylinositol pentamannoside mannosyltransferase (431 aa).

10 helical membrane-spanning segments follow: residues 43–63, 108–128, 148–168, 175–195, 202–222, 229–249, 290–310, 332–352, 364–384, and 397–417; these read AAVL…YLAP, FAAV…ALLW, GGTA…AIWI, FDYG…VYTP, LLVG…VYLV, AAAF…LVVG, GFGP…ILAW, LSPI…IWLI, ILGW…LSFA, and LAWA…WIAA.

This sequence belongs to the glycosyltransferase 87 family.

Its subcellular location is the cell membrane. Its pathway is phospholipid metabolism; phosphatidylinositol metabolism. Functionally, catalyzes the alpha-1,2 addition of a mannose residue from polyprenol-phosphate-mannose (PPM) to a monoacyl phosphatidylinositol tetramannoside (AcPIM4) to generate a monoacyl phosphatidylinositol pentamannoside (AcPIM5). This Mycobacterium tuberculosis (strain CDC 1551 / Oshkosh) protein is Polyprenol-phosphate-mannose-dependent alpha-(1-2)-phosphatidylinositol pentamannoside mannosyltransferase (pimE).